The following is a 292-amino-acid chain: 33 kDa chaperonin (292 aa).

Cystine bridges form between C238–C240 and C271–C274.

This sequence belongs to the HSP33 family. Under oxidizing conditions two disulfide bonds are formed involving the reactive cysteines. Under reducing conditions zinc is bound to the reactive cysteines and the protein is inactive.

The protein localises to the cytoplasm. Redox regulated molecular chaperone. Protects both thermally unfolding and oxidatively damaged proteins from irreversible aggregation. Plays an important role in the bacterial defense system toward oxidative stress. The polypeptide is 33 kDa chaperonin (Latilactobacillus sakei subsp. sakei (strain 23K) (Lactobacillus sakei subsp. sakei)).